Reading from the N-terminus, the 548-residue chain is Membrane protein insertase YidC (548 aa).

A helical transmembrane segment spans residues 6 to 26 (NLLVIALLFVSFMIWQAWEQD). The segment at 28–55 (NPQPQAQQTTQTTTTAAGSAADQGVPAS) is disordered. Low complexity predominate over residues 30–50 (QPQAQQTTQTTTTAAGSAADQ). The next 4 membrane-spanning stretches (helical) occupy residues 350–370 (FVGN…GIMY), 420–440 (LGGC…YYML), 458–478 (LSAQ…MFFI), and 499–519 (PVIF…YYIV).

This sequence belongs to the OXA1/ALB3/YidC family. Type 1 subfamily. Interacts with the Sec translocase complex via SecD. Specifically interacts with transmembrane segments of nascent integral membrane proteins during membrane integration.

The protein resides in the cell inner membrane. Required for the insertion and/or proper folding and/or complex formation of integral membrane proteins into the membrane. Involved in integration of membrane proteins that insert both dependently and independently of the Sec translocase complex, as well as at least some lipoproteins. Aids folding of multispanning membrane proteins. The polypeptide is Membrane protein insertase YidC (Escherichia fergusonii (strain ATCC 35469 / DSM 13698 / CCUG 18766 / IAM 14443 / JCM 21226 / LMG 7866 / NBRC 102419 / NCTC 12128 / CDC 0568-73)).